The primary structure comprises 339 residues: DNA repair protein RAD51 homolog 1 (339 aa).

Positions Met-1–Glu-23 are disordered. Positions Thr-48–Glu-77 constitute a HhH domain. ATP is bound at residue Gly-127–Thr-134.

This sequence belongs to the RecA family. RAD51 subfamily. As to quaternary structure, forms linear homooligomers, giving rise to a RAD51 nucleoprotein filament, which is essential for strand-pairing reactions during DNA recombination. Expressed at high levels in lymphoid and reproductive organs.

The protein localises to the nucleus. Its subcellular location is the cytoplasm. It localises to the chromosome. Functionally, plays an important role in homologous strand exchange, a key step in DNA repair through homologous recombination (HR). Binds to single-stranded DNA in an ATP-dependent manner to form nucleoprotein filaments which are essential for the homology search and strand exchange. Catalyzes the recognition of homology and strand exchange between homologous DNA partners to form a joint molecule between a processed DNA break and the repair template. Recruited to resolve stalled replication forks during replication stress. Also involved in interstrand cross-link repair. The protein is DNA repair protein RAD51 homolog 1 (RAD51A) of Gallus gallus (Chicken).